A 105-amino-acid chain; its full sequence is Phosphoribosyl-ATP pyrophosphatase (105 aa).

Belongs to the PRA-PH family.

It is found in the cytoplasm. It catalyses the reaction 1-(5-phospho-beta-D-ribosyl)-ATP + H2O = 1-(5-phospho-beta-D-ribosyl)-5'-AMP + diphosphate + H(+). Its pathway is amino-acid biosynthesis; L-histidine biosynthesis; L-histidine from 5-phospho-alpha-D-ribose 1-diphosphate: step 2/9. This is Phosphoribosyl-ATP pyrophosphatase from Ruegeria sp. (strain TM1040) (Silicibacter sp.).